Here is a 314-residue protein sequence, read N- to C-terminus: Ribosomal protein uL3 glutamine methyltransferase (314 aa).

The protein belongs to the protein N5-glutamine methyltransferase family. PrmB subfamily.

The catalysed reaction is L-glutaminyl-[ribosomal protein uL3] + S-adenosyl-L-methionine = N(5)-methyl-L-glutaminyl-[ribosomal protein uL3] + S-adenosyl-L-homocysteine + H(+). In terms of biological role, methylates large ribosomal subunit protein uL3 on a specific glutamine residue. The sequence is that of Ribosomal protein uL3 glutamine methyltransferase from Haemophilus influenzae (strain ATCC 51907 / DSM 11121 / KW20 / Rd).